A 260-amino-acid chain; its full sequence is uncharacterized protein (260 aa).

The ABC transporter domain occupies 4-231; it reads LHVDHVTHTY…PKELAAMLPF (228 aa). 40–47 provides a ligand contact to ATP; it reads GPSGCGKT.

The protein belongs to the ABC transporter superfamily.

This is an uncharacterized protein from Bacillus subtilis (strain 168).